The primary structure comprises 583 residues: Aspartate--tRNA ligase (583 aa).

Glutamate 173 contributes to the L-aspartate binding site. The tract at residues 197–200 (QLFK) is aspartate. Arginine 219 is a binding site for L-aspartate. Residues 219 to 221 (RDE) and glutamine 228 contribute to the ATP site. Position 444 (histidine 444) interacts with L-aspartate. ATP is bound at residue glutamate 478. Residue arginine 485 participates in L-aspartate binding. 530 to 533 (GLDR) lines the ATP pocket.

Belongs to the class-II aminoacyl-tRNA synthetase family. Type 1 subfamily. Homodimer.

It is found in the cytoplasm. The enzyme catalyses tRNA(Asp) + L-aspartate + ATP = L-aspartyl-tRNA(Asp) + AMP + diphosphate. In terms of biological role, catalyzes the attachment of L-aspartate to tRNA(Asp) in a two-step reaction: L-aspartate is first activated by ATP to form Asp-AMP and then transferred to the acceptor end of tRNA(Asp). The chain is Aspartate--tRNA ligase from Azobacteroides pseudotrichonymphae genomovar. CFP2.